Consider the following 112-residue polypeptide: Transmembrane protein 14 homolog (112 aa).

A helical transmembrane segment spans residues 3–23; sequence VDWFGYVYAATVAAGGIMGYA.

The protein belongs to the TMEM14 family.

It localises to the membrane. The chain is Transmembrane protein 14 homolog from Drosophila melanogaster (Fruit fly).